We begin with the raw amino-acid sequence, 384 residues long: FAD-dependent urate hydroxylase (384 aa).

FAD contacts are provided by residues Gly11, 30-31 (EA), Ser43, and Val125. Substrate contacts are provided by residues Asn178, Arg204, and 216–218 (YFF). FAD contacts are provided by residues Asp285 and 295 to 299 (GQGGC).

Belongs to the FAD-dependent urate hydroxylase family. It depends on FAD as a cofactor.

The enzyme catalyses urate + NADH + O2 + H(+) = 5-hydroxyisourate + NAD(+) + H2O. Its pathway is purine metabolism; urate degradation. Its function is as follows. Catalyzes the hydroxylation of uric acid to 5-hydroxyisourate. This chain is FAD-dependent urate hydroxylase (hpxO), found in Klebsiella oxytoca.